Consider the following 402-residue polypeptide: Endoglucanase 1 (402 aa).

Pyrrolidone carboxylic acid is present on glutamine 1. 3 cysteine pairs are disulfide-bonded: cysteine 18–cysteine 24, cysteine 51–cysteine 73, and cysteine 63–cysteine 69. Asparagine 89 carries an N-linked (GlcNAc...) asparagine glycan. 6 cysteine pairs are disulfide-bonded: cysteine 140-cysteine 365, cysteine 172-cysteine 195, cysteine 176-cysteine 194, cysteine 215-cysteine 234, cysteine 223-cysteine 228, and cysteine 239-cysteine 315. Glutamate 197 functions as the Nucleophile in the catalytic mechanism. Glutamate 202 (proton donor) is an active-site residue. N-linked (GlcNAc...) asparagine glycosylation is present at asparagine 247.

Belongs to the glycosyl hydrolase 7 (cellulase C) family. As to quaternary structure, monomer.

The protein localises to the secreted. The catalysed reaction is Endohydrolysis of (1-&gt;4)-beta-D-glucosidic linkages in cellulose, lichenin and cereal beta-D-glucans.. In terms of biological role, the biological conversion of cellulose to glucose generally requires three types of hydrolytic enzymes: (1) Endoglucanases which cut internal beta-1,4-glucosidic bonds; (2) Exocellobiohydrolases that cut the disaccharide cellobiose from the non-reducing end of the cellulose polymer chain; (3) Beta-1,4-glucosidases which hydrolyze the cellobiose and other short cello-oligosaccharides to glucose. The polypeptide is Endoglucanase 1 (CEL7B) (Humicola insolens (Soft-rot fungus)).